The sequence spans 691 residues: POU domain, class 6, transcription factor 2 (691 aa).

The segment covering 25–36 (MNAELRGEDKAA) has biased composition (basic and acidic residues). Disordered regions lie at residues 25-93 (MNAE…PVGP), 186-297 (LQQQ…LQLV), and 435-461 (SQAS…SALS). The segment covering 186 to 195 (LQQQQQQQQQ) has biased composition (low complexity). Pro residues predominate over residues 196 to 210 (QPPPSTNQHPQPAPQ). The segment covering 211–220 (APSQSQQQPL) has biased composition (low complexity). Pro residues predominate over residues 221-238 (QPTPPQQPPPASQQPPAP). 2 stretches are compositionally biased toward low complexity: residues 239–280 (TSQL…SQSP) and 438–461 (SMSQ…SALS). Positions 476 to 586 (VDGVNLEEIR…VLERWMAEAE (111 aa)) constitute a POU-specific domain. A DNA-binding region (homeobox) is located at residues 607–666 (KRKRRTSFTPQALEILNAHFEKNTHPSGQEMTEIAEKLNYDREVVRVWFCNKRQALKNTI).

It belongs to the POU transcription factor family. Class-6 subfamily. In terms of tissue distribution, expressed only within the CNS, where its expression is restricted to the medical habenulla, to a dispersed population of neurons in the dorsal hypothalamus, and to subsets of ganglion and amacrine cells in the retina.

The protein localises to the nucleus. Probable transcription factor likely to be involved in early steps in the differentiation of amacrine and ganglion cells. Recognizes and binds to the DNA sequence 5'-ATGCAAAT-3'. Isoform 1 does not bind DNA. The polypeptide is POU domain, class 6, transcription factor 2 (POU6F2) (Homo sapiens (Human)).